We begin with the raw amino-acid sequence, 383 residues long: uncharacterized protein (383 aa).

Positions 58-383 constitute a YcaO domain; that stretch reads GKGATRTQAR…RVGRRIRSSI (326 aa). The tract at residues 80–100 is disordered; sequence AERKPEDETFTAHPEDCDGLD.

This is an uncharacterized protein from Methanothermobacter thermautotrophicus (strain ATCC 29096 / DSM 1053 / JCM 10044 / NBRC 100330 / Delta H) (Methanobacterium thermoautotrophicum).